The sequence spans 377 residues: Unsaturated 3S-rhamnoglycuronyl hydrolase (377 aa).

Positions 1 to 25 are cleaved as a signal peptide; it reads MKNQALKILTLCVLVGSAMSLKLYA. The Proton donor role is filled by D161.

Belongs to the glycosyl hydrolase 105 family.

The protein localises to the periplasm. Functionally, unsaturated beta-glucuronyl hydrolase involved in ulvan degradation. Ulvan is the main polysaccharide component of the Ulvales (green seaweed) cell wall. It is composed of disaccharide building blocks comprising 3-sulfated rhamnose (Rha3S) linked to D-glucuronic acid (GlcA), L-iduronic acid (IduA), or D-xylose (Xyl). Unsaturated 3S-rhamnoglycuronyl hydrolase works together with ulvan lyases to fully degrade the ulvan polymer, catalyzing specifically the cleavage of the unsaturated 4-deoxy-L-threo-hex-4-enopyranosiduronic acid (deltaUA) of deltaUA-Rha3S disaccharides and deltaUA-Rha3S-Xyl-Rha3S tetrasaccharides, the end products of the ulvan lyase reaction. Also hydrolases deltaUA-Rha3S-IduA-Rha3S and deltaUA-Rha3S-GlcA-Rha3S tetrasaccharidestetrasaccharides. Prefers tetrasaccharides over disaccharides and prefers an uronic residue at subsite +2. In Formosa agariphila (strain DSM 15362 / KCTC 12365 / LMG 23005 / KMM 3901 / M-2Alg 35-1), this protein is Unsaturated 3S-rhamnoglycuronyl hydrolase.